The chain runs to 264 residues: tRNA pseudouridine synthase A (264 aa).

The active-site Nucleophile is Asp-51. Tyr-109 contacts substrate.

Belongs to the tRNA pseudouridine synthase TruA family. In terms of assembly, homodimer.

The enzyme catalyses uridine(38/39/40) in tRNA = pseudouridine(38/39/40) in tRNA. In terms of biological role, formation of pseudouridine at positions 38, 39 and 40 in the anticodon stem and loop of transfer RNAs. This Vibrio parahaemolyticus serotype O3:K6 (strain RIMD 2210633) protein is tRNA pseudouridine synthase A.